Reading from the N-terminus, the 402-residue chain is MRMSPVFACLALGLALIFGEGSASYQPQSAAASLATDFGVKVFQQVVRASKDRNVVFSPYGVASVLAMLQLTTGGETRQQIQEAMQFKIEEKGMAPAFHRLYKELMGPWNKDEISTADAIFVQRDLELVHGFMPNFFRLFRTTVKQVDFSEVERARFIVNDWVKRHTKGMISDLLGEGAVDQLTRLVLVNALYFNGQWKMPFPESNTHHRLFHKSDGSTISVPMMAQTNKFNYTEFTTPDGRYYDILELPYHGNTLSMLIAAPYEKEVPLSALTSILDAELISQWKGNMTRLTRLLVLPKFSLETEIDLRRPLENLGMTDMFRPSQADFSSFSDQEFLYVSQALQKVKIEVNESGTLASSSTALVVSARMAPEEIIMDRPFLFVVRHNPTGTVLFMGQVMEP.

A signal peptide spans 1–23 (MRMSPVFACLALGLALIFGEGSA). Asparagine 232, asparagine 288, and asparagine 352 each carry an N-linked (GlcNAc...) asparagine glycan.

It belongs to the serpin family. As to quaternary structure, forms a heterodimer with TMPRSS7. Interacts with VTN. Binds LRP1B; binding is followed by internalization and degradation. Interacts with PPP1CB. In complex with PLAU/uPA, interacts with PLAUR/uPAR. Interacts with SORL1 and LRP1, either alone or in complex with PLAU; these interactions are abolished in the presence of LRPAP1/RAP. The ternary complex composed of PLAUR-PLAU-PAI1 also interacts with SORL1. Interacts with PLAT/tPA. Also interacts with SORL1, when complexed to PLAT/tPA. Vascular endothelial cells may be the primary site of synthesis of plasma PAI1.

Its subcellular location is the secreted. In terms of biological role, serine protease inhibitor. Inhibits TMPRSS7. Is a primary inhibitor of tissue-type plasminogen activator (PLAT) and urokinase-type plasminogen activator (PLAU). As PLAT inhibitor, it is required for fibrinolysis down-regulation and is responsible for the controlled degradation of blood clots. As PLAU inhibitor, it is involved in the regulation of cell adhesion and spreading. Acts as a regulator of cell migration, independently of its role as protease inhibitor. It is required for stimulation of keratinocyte migration during cutaneous injury repair. It is involved in cellular and replicative senescence. Plays a role in alveolar type 2 cells senescence in the lung. Is involved in the regulation of cementogenic differentiation of periodontal ligament stem cells, and regulates odontoblast differentiation and dentin formation during odontogenesis. In Bos taurus (Bovine), this protein is Plasminogen activator inhibitor 1 (SERPINE1).